Reading from the N-terminus, the 345-residue chain is Methionine import ATP-binding protein MetN (345 aa).

Positions 2–241 (IKLKNISKIF…PKTELAQEFI (240 aa)) constitute an ABC transporter domain. 38-45 (GASGAGKS) lines the ATP pocket.

The protein belongs to the ABC transporter superfamily. Methionine importer (TC 3.A.1.24) family. As to quaternary structure, the complex is composed of two ATP-binding proteins (MetN), two transmembrane proteins (MetI) and a solute-binding protein (MetQ).

The protein resides in the cell inner membrane. The enzyme catalyses L-methionine(out) + ATP + H2O = L-methionine(in) + ADP + phosphate + H(+). It catalyses the reaction D-methionine(out) + ATP + H2O = D-methionine(in) + ADP + phosphate + H(+). Its function is as follows. Part of the ABC transporter complex MetNIQ involved in methionine import. Responsible for energy coupling to the transport system. This is Methionine import ATP-binding protein MetN from Mannheimia succiniciproducens (strain KCTC 0769BP / MBEL55E).